The following is a 59-amino-acid chain: Large ribosomal subunit protein uL30 (59 aa).

It belongs to the universal ribosomal protein uL30 family. Part of the 50S ribosomal subunit.

In Staphylococcus aureus (strain JH1), this protein is Large ribosomal subunit protein uL30.